Here is a 182-residue protein sequence, read N- to C-terminus: uncharacterized protein (182 aa).

Residues Met1–Gly26 form the signal peptide. The disordered stretch occupies residues Tyr68 to Thr90. A compositionally biased stretch (low complexity) spans Pro74 to Thr90.

This is an uncharacterized protein from Dryophytes versicolor (chameleon treefrog).